Here is a 365-residue protein sequence, read N- to C-terminus: Protein RecA (365 aa).

73-80 (GPESSGKT) lines the ATP pocket.

This sequence belongs to the RecA family.

Its subcellular location is the cytoplasm. In terms of biological role, can catalyze the hydrolysis of ATP in the presence of single-stranded DNA, the ATP-dependent uptake of single-stranded DNA by duplex DNA, and the ATP-dependent hybridization of homologous single-stranded DNAs. It interacts with LexA causing its activation and leading to its autocatalytic cleavage. This Prochlorococcus marinus (strain MIT 9215) protein is Protein RecA.